Here is an 819-residue protein sequence, read N- to C-terminus: Myosin light chain kinase 3 (819 aa).

A disordered region spans residues 146–460; sequence VPWRRGSPGD…PGVGNPEPEQ (315 aa). Ser152 carries the phosphoserine modification. Composition is skewed to basic and acidic residues over residues 158 to 170 and 183 to 196; these read EENK…EGAK and DARE…KADV. The span at 307–318 shows a compositional bias: pro residues; sequence GPGPQCPGPPGL. Residues Ser355, Ser401, and Ser408 each carry the phosphoserine modification. Residues 515–770 enclose the Protein kinase domain; that stretch reads VCQHEVLGGG…ATQCLKHEWL (256 aa). Residues 521–529 and Lys544 each bind ATP; that span reads LGGGRFGQV. Catalysis depends on Asp636, which acts as the Proton acceptor.

The protein belongs to the protein kinase superfamily. CAMK Ser/Thr protein kinase family. Mg(2+) is required as a cofactor. In terms of processing, phosphorylated on serine residues.

It is found in the cytoplasm. The catalysed reaction is L-seryl-[myosin light chain] + ATP = O-phospho-L-seryl-[myosin light chain] + ADP + H(+). It carries out the reaction L-threonyl-[myosin light chain] + ATP = O-phospho-L-threonyl-[myosin light chain] + ADP + H(+). In terms of biological role, kinase that phosphorylates MYL2 in vitro. Promotes sarcomere formation in cardiomyocytes and increases cardiomyocyte contractility. The protein is Myosin light chain kinase 3 (MYLK3) of Pongo abelii (Sumatran orangutan).